A 90-amino-acid polypeptide reads, in one-letter code: SAGA-associated factor 11 (90 aa).

The SGF11-type zinc finger occupies 63–84 (FSCDNCGRKIAGGRFAQHINKC).

This sequence belongs to the SGF11 family. In terms of assembly, component of the 1.8 MDa SAGA transcription coactivator-HAT complex. SAGA is built of 5 distinct domains with specialized functions. Within the SAGA complex, SUS1, SGF11, SGF73 and UBP8 form an additional subcomplex of SAGA called the DUB module (deubiquitination module). Interacts directly with SGF73, SUS1 and UBP8.

It is found in the nucleus. Functions as a component of the transcription regulatory histone acetylation (HAT) complex SAGA. At the promoters, SAGA is required for recruitment of the basal transcription machinery. It influences RNA polymerase II transcriptional activity through different activities such as TBP interaction and promoter selectivity, interaction with transcription activators, and chromatin modification through histone acetylation and deubiquitination. SAGA acetylates nucleosomal histone H3 to some extent (to form H3K9ac, H3K14ac, H3K18ac and H3K23ac). SAGA interacts with DNA via upstream activating sequences (UASs). Involved in transcriptional regulation of a subset of SAGA-regulated genes. Within the SAGA complex, participates in a subcomplex, that specifically deubiquitinates histones H2B. In Lodderomyces elongisporus (strain ATCC 11503 / CBS 2605 / JCM 1781 / NBRC 1676 / NRRL YB-4239) (Yeast), this protein is SAGA-associated factor 11.